Here is a 297-residue protein sequence, read N- to C-terminus: Cyclin-dependent kinase 1 (297 aa).

Met-1 carries the post-translational modification N-acetylmethionine. Tyr-4 carries the post-translational modification Phosphotyrosine; by PKR. The 284-residue stretch at 4 to 287 (YTKIEKIGEG…GKMALNHPYF (284 aa)) folds into the Protein kinase domain. N6-acetyllysine; alternate is present on residues Lys-6 and Lys-9. Glycyl lysine isopeptide (Lys-Gly) (interchain with G-Cter in SUMO2); alternate cross-links involve residues Lys-6 and Lys-9. 10 to 18 (IGEGTYGVV) is an ATP binding site. Thr-14 carries the post-translational modification Phosphothreonine; by PKMYT1. Tyr-15 bears the Phosphotyrosine; by PKMYT1, WEE1 and WEE2 mark. Tyr-15 is subject to Phosphotyrosine; by WEE1 and WEE2. Phosphotyrosine is present on Tyr-19. Lys-20 is covalently cross-linked (Glycyl lysine isopeptide (Lys-Gly) (interchain with G-Cter in SUMO2)). Lys-33 is a binding site for ATP. Ser-39 is modified (phosphoserine). Tyr-77 is subject to Phosphotyrosine. Asp-128 acts as the Proton acceptor in catalysis. Residue Lys-139 forms a Glycyl lysine isopeptide (Lys-Gly) (interchain with G-Cter in SUMO2) linkage. Thr-141 is subject to Phosphothreonine. Phosphothreonine; by CAK is present on Thr-161. Phosphoserine is present on Ser-178. Position 222 is a phosphothreonine (Thr-222). Lys-245 is subject to N6-succinyllysine. Ser-248 is subject to Phosphoserine.

This sequence belongs to the protein kinase superfamily. CMGC Ser/Thr protein kinase family. CDC2/CDKX subfamily. Forms a stable but non-covalent complex with a regulatory subunit and with a cyclin. Interacts with cyclins-B (CCNB1, CCNB2 and CCNB3) to form a serine/threonine kinase holoenzyme complex also known as maturation promoting factor (MPF). The cyclin subunit imparts substrate specificity to the complex. Can also form CDK1-cylin-D and CDK1-cyclin-E complexes that phosphorylate RB1 in vitro. Binds to RB1 and other transcription factors such as FOXO1 and RUNX2. Promotes G2-M transition when in complex with a cyclin-B. Interacts with DLGAP5. Binds to the CDK inhibitors CDKN1A/p21 and CDKN1B/p27. Isoform 2 is unable to complex with cyclin-B1 and also fails to bind to CDKN1A/p21. Interacts with catalytically active CCNB1 and RALBP1 during mitosis to form an endocytotic complex during interphase. Associates with cyclins-A and B1 during S-phase in regenerating hepatocytes. Interacts with FANCC. Interacts with CEP63; this interaction recruits CDK1 to centrosomes. Interacts with CENPA. Interacts with NR1D1. Post-translationally, phosphorylation at Thr-161 by CAK/CDK7 activates kinase activity. Phosphorylation at Thr-14 and Tyr-15 by PKMYT1 prevents nuclear translocation. Phosphorylation at Tyr-15 by WEE1 and WEE2 inhibits the protein kinase activity and acts as a negative regulator of entry into mitosis (G2 to M transition). Phosphorylation by PKMYT1 and WEE1 takes place during mitosis to keep CDK1-cyclin-B complexes inactive until the end of G2. By the end of G2, PKMYT1 and WEE1 are inactivated, but CDC25A and CDC25B are activated. Dephosphorylation by active CDC25A and CDC25B at Thr-14 and Tyr-15, leads to CDK1 activation at the G2-M transition. Phosphorylation at Tyr-15 by WEE2 during oogenesis is required to maintain meiotic arrest in oocytes during the germinal vesicle (GV) stage, a long period of quiescence at dictyate prophase I, leading to prevent meiotic reentry. Phosphorylation by WEE2 is also required for metaphase II exit during egg activation to ensure exit from meiosis in oocytes and promote pronuclear formation. Phosphorylated at Tyr-4 by PKR/EIF2AK2 upon genotoxic stress. This phosphorylation triggers CDK1 polyubiquitination and subsequent proteolysis, thus leading to G2 arrest. In terms of processing, polyubiquitinated upon genotoxic stress.

It is found in the nucleus. Its subcellular location is the cytoplasm. It localises to the mitochondrion. The protein resides in the cytoskeleton. The protein localises to the microtubule organizing center. It is found in the centrosome. Its subcellular location is the spindle. It catalyses the reaction L-seryl-[protein] + ATP = O-phospho-L-seryl-[protein] + ADP + H(+). The catalysed reaction is L-threonyl-[protein] + ATP = O-phospho-L-threonyl-[protein] + ADP + H(+). It carries out the reaction [DNA-directed RNA polymerase] + ATP = phospho-[DNA-directed RNA polymerase] + ADP + H(+). Phosphorylation at Thr-14 or Tyr-15 inactivates the enzyme, while phosphorylation at Thr-161 activates it. Activated through a multistep process; binding to cyclin-B is required for relocation of cyclin-kinase complexes to the nucleus, activated by CAK/CDK7-mediated phosphorylation on Thr-161, and CDC25-mediated dephosphorylation of inhibitory phosphorylation on Thr-14 and Tyr-15. Activity is restricted during S-phase in an ATR-dependent manner to prevent premature entry into G2. Repressed by the CDK inhibitors CDKN1A/p21 and CDKN1B/p27 during the G1 phase and by CDKN1A/p21 at the G1-S checkpoint upon DNA damage. Transient activation by rapid and transient dephosphorylation at Tyr-15 triggered by TGFB1. Its function is as follows. Plays a key role in the control of the eukaryotic cell cycle by modulating the centrosome cycle as well as mitotic onset; promotes G2-M transition via association with multiple interphase cyclins. Phosphorylates PARVA/actopaxin, APC, AMPH, APC, BARD1, Bcl-xL/BCL2L1, BRCA2, CALD1, CASP8, CDC7, CDC20, CDC25A, CDC25C, CC2D1A, CENPA, CSNK2 proteins/CKII, FZR1/CDH1, CDK7, CEBPB, CHAMP1, DMD/dystrophin, EEF1 proteins/EF-1, EZH2, KIF11/EG5, EGFR, FANCG, FOS, GFAP, GOLGA2/GM130, GRASP1, UBE2A/hHR6A, HIST1H1 proteins/histone H1, HMGA1, HIVEP3/KRC, KAT5, LMNA, LMNB, LBR, LATS1, MAP1B, MAP4, MARCKS, MCM2, MCM4, MKLP1, MLST8, MYB, NEFH, NFIC, NPC/nuclear pore complex, PITPNM1/NIR2, NPM1, NCL, NUCKS1, NPM1/numatrin, ORC1, PRKAR2A, EEF1E1/p18, EIF3F/p47, p53/TP53, NONO/p54NRB, PAPOLA, PLEC/plectin, RB1, TPPP, UL40/R2, RAB4A, RAP1GAP, RBBP8/CtIP, RCC1, RPS6KB1/S6K1, KHDRBS1/SAM68, ESPL1, SKI, BIRC5/survivin, STIP1, TEX14, beta-tubulins, MAPT/TAU, NEDD1, VIM/vimentin, TK1, FOXO1, RUNX1/AML1, SAMHD1, SIRT2, CGAS and RUNX2. CDK1/CDC2-cyclin-B controls pronuclear union in interphase fertilized eggs. Essential for early stages of embryonic development. During G2 and early mitosis, CDC25A/B/C-mediated dephosphorylation activates CDK1/cyclin complexes which phosphorylate several substrates that trigger at least centrosome separation, Golgi dynamics, nuclear envelope breakdown and chromosome condensation. Once chromosomes are condensed and aligned at the metaphase plate, CDK1 activity is switched off by WEE1- and PKMYT1-mediated phosphorylation to allow sister chromatid separation, chromosome decondensation, reformation of the nuclear envelope and cytokinesis. Phosphorylates KRT5 during prometaphase and metaphase. Inactivated by PKR/EIF2AK2- and WEE1-mediated phosphorylation upon DNA damage to stop cell cycle and genome replication at the G2 checkpoint thus facilitating DNA repair. Reactivated after successful DNA repair through WIP1-dependent signaling leading to CDC25A/B/C-mediated dephosphorylation and restoring cell cycle progression. Catalyzes lamin (LMNA, LMNB1 and LMNB2) phosphorylation at the onset of mitosis, promoting nuclear envelope breakdown. In proliferating cells, CDK1-mediated FOXO1 phosphorylation at the G2-M phase represses FOXO1 interaction with 14-3-3 proteins and thereby promotes FOXO1 nuclear accumulation and transcription factor activity, leading to cell death of postmitotic neurons. The phosphorylation of beta-tubulins regulates microtubule dynamics during mitosis. NEDD1 phosphorylation promotes PLK1-mediated NEDD1 phosphorylation and subsequent targeting of the gamma-tubulin ring complex (gTuRC) to the centrosome, an important step for spindle formation. In addition, CC2D1A phosphorylation regulates CC2D1A spindle pole localization and association with SCC1/RAD21 and centriole cohesion during mitosis. The phosphorylation of Bcl-xL/BCL2L1 after prolongated G2 arrest upon DNA damage triggers apoptosis. In contrast, CASP8 phosphorylation during mitosis prevents its activation by proteolysis and subsequent apoptosis. This phosphorylation occurs in cancer cell lines, as well as in primary breast tissues and lymphocytes. EZH2 phosphorylation promotes H3K27me3 maintenance and epigenetic gene silencing. CALD1 phosphorylation promotes Schwann cell migration during peripheral nerve regeneration. CDK1-cyclin-B complex phosphorylates NCKAP5L and mediates its dissociation from centrosomes during mitosis. Regulates the amplitude of the cyclic expression of the core clock gene BMAL1 by phosphorylating its transcriptional repressor NR1D1, and this phosphorylation is necessary for SCF(FBXW7)-mediated ubiquitination and proteasomal degradation of NR1D1. Phosphorylates EML3 at 'Thr-881' which is essential for its interaction with HAUS augmin-like complex and TUBG1. Phosphorylates CGAS during mitosis, leading to its inhibition, thereby preventing CGAS activation by self DNA during mitosis. Phosphorylates SKA3 during mitosis which promotes SKA3 binding to the NDC80 complex and anchoring of the SKA complex to kinetochores, to enable stable attachment of mitotic spindle microtubules to kinetochores. This Bos taurus (Bovine) protein is Cyclin-dependent kinase 1 (CDK1).